Here is a 386-residue protein sequence, read N- to C-terminus: UDP-N-acetylbacillosamine transaminase (386 aa).

Substrate is bound by residues 25 to 28, A56, and S179; that span reads NYIA. An N6-(pyridoxal phosphate)lysine modification is found at K184. Residues N227 and 325–328 contribute to the substrate site; that span reads QIET.

Belongs to the DegT/DnrJ/EryC1 family. Pyridoxal 5'-phosphate serves as cofactor.

It catalyses the reaction UDP-N-acetylbacillosamine + 2-oxoglutarate = UDP-2-acetamido-2,6-dideoxy-alpha-D-xylo-hex-4-ulose + L-glutamate. The protein operates within protein modification; protein glycosylation. Functionally, aminotransferase involved in the bacillosamine biosynthesis pathway by producing UDP-4-amino-4,6-dideoxy-alpha-D-GlcNAc (UDP-2-acetamido-4-amino-2,4,6-trideoxy-alpha-D-glucopyranose), a precursor used in the production of the glycan component 2,4-diacetamido-2,4,6-trideoxy-alpha-D-glucopyranose. Required for host colonization and virulence. Involved in the N-linked protein glycosylation pathway. This Campylobacter jejuni subsp. jejuni serotype O:2 (strain ATCC 700819 / NCTC 11168) protein is UDP-N-acetylbacillosamine transaminase (pglE).